The sequence spans 778 residues: Ral guanine nucleotide dissociation stimulator-like 2 (778 aa).

Low complexity predominate over residues 1 to 15 (MLPRPLRLLLDTTPP). A disordered region spans residues 1–59 (MLPRPLRLLLDTTPPGGVVLSSFRSRDPEEGGDPGGRAVGGGQEEEDEEEEEASVSVWD). Positions 33–42 (DPGGRAVGGG) are enriched in gly residues. Positions 43–59 (QEEEDEEEEEASVSVWD) are enriched in acidic residues. Residues 88 to 212 (SSRRLRAGTL…GSADLIRNLR (125 aa)) form the N-terminal Ras-GEF domain. The 271-residue stretch at 243-513 (LADHLAEQLT…HRVSCEVEPP (271 aa)) folds into the Ras-GEF domain. 4 disordered regions span residues 503–524 (SHRV…ARTP), 541–564 (GGPT…GTPA), 581–647 (SLDS…GPGS), and 735–769 (RRPS…IKAT). Over residues 581–592 (SLDSALESSPSL) the composition is skewed to low complexity. The span at 620–632 (CGSPLSGNTGEGT) shows a compositional bias: polar residues. The Ras-associating domain maps to 649–736 (DCRIIRVQME…HDFLLRQRRR (88 aa)). A compositionally biased stretch (low complexity) spans 738 to 756 (SAATPGSHSGPSASGTPPS).

As to quaternary structure, interacts with SAMD9.

Functionally, probable guanine nucleotide exchange factor. Putative effector of Ras and/or Rap. Associates with the GTP-bound form of Rap 1A and H-Ras in vitro. The protein is Ral guanine nucleotide dissociation stimulator-like 2 (Rgl2) of Mus musculus (Mouse).